We begin with the raw amino-acid sequence, 89 residues long: Co-chaperonin GroES (89 aa).

It belongs to the GroES chaperonin family. Heptamer of 7 subunits arranged in a ring. Interacts with the chaperonin GroEL.

It is found in the cytoplasm. Together with the chaperonin GroEL, plays an essential role in assisting protein folding. The GroEL-GroES system forms a nano-cage that allows encapsulation of the non-native substrate proteins and provides a physical environment optimized to promote and accelerate protein folding. GroES binds to the apical surface of the GroEL ring, thereby capping the opening of the GroEL channel. The sequence is that of Co-chaperonin GroES from Kosmotoga olearia (strain ATCC BAA-1733 / DSM 21960 / TBF 19.5.1).